The primary structure comprises 379 residues: Putative acetyl-CoA C-acetyltransferase VraB (379 aa).

The active-site Acyl-thioester intermediate is cysteine 86. Histidine 338 (proton acceptor) is an active-site residue.

It belongs to the thiolase-like superfamily. Thiolase family.

This chain is Putative acetyl-CoA C-acetyltransferase VraB (vraB), found in Staphylococcus aureus (strain COL).